The chain runs to 458 residues: ATP synthase subunit beta (458 aa).

148-155 (GGAGVGKT) lines the ATP pocket.

Belongs to the ATPase alpha/beta chains family. As to quaternary structure, F-type ATPases have 2 components, CF(1) - the catalytic core - and CF(0) - the membrane proton channel. CF(1) has five subunits: alpha(3), beta(3), gamma(1), delta(1), epsilon(1). CF(0) has three main subunits: a(1), b(2) and c(9-12). The alpha and beta chains form an alternating ring which encloses part of the gamma chain. CF(1) is attached to CF(0) by a central stalk formed by the gamma and epsilon chains, while a peripheral stalk is formed by the delta and b chains.

It localises to the cell inner membrane. It catalyses the reaction ATP + H2O + 4 H(+)(in) = ADP + phosphate + 5 H(+)(out). In terms of biological role, produces ATP from ADP in the presence of a proton gradient across the membrane. The catalytic sites are hosted primarily by the beta subunits. The chain is ATP synthase subunit beta from Actinobacillus succinogenes (strain ATCC 55618 / DSM 22257 / CCUG 43843 / 130Z).